Reading from the N-terminus, the 219-residue chain is Proteasome subunit beta type-9 (219 aa).

The propeptide at 1-20 (MLRAGAPTAGSFRTEEVHTG) is removed in mature form. Threonine 21 acts as the Nucleophile in catalysis. Residues lysine 53 and lysine 109 each carry the N6-acetyllysine modification.

Belongs to the peptidase T1B family. In terms of assembly, the 26S proteasome consists of a 20S proteasome core and two 19S regulatory subunits. The 20S proteasome core is composed of 28 subunits that are arranged in four stacked rings, resulting in a barrel-shaped structure. The two end rings are each formed by seven alpha subunits, and the two central rings are each formed by seven beta subunits. The catalytic chamber with the active sites is on the inside of the barrel. Component of the immunoproteasome, where it displaces the equivalent housekeeping subunit PSMB6. Component of the spermatoproteasome, a form of the proteasome specifically found in testis. Post-translationally, autocleaved. The resulting N-terminal Thr residue of the mature subunit is responsible for the nucleophile proteolytic activity.

It is found in the cytoplasm. The protein localises to the nucleus. The enzyme catalyses Cleavage of peptide bonds with very broad specificity.. Its function is as follows. The proteasome is a multicatalytic proteinase complex which is characterized by its ability to cleave peptides with Arg, Phe, Tyr, Leu, and Glu adjacent to the leaving group at neutral or slightly basic pH. The proteasome has an ATP-dependent proteolytic activity. This subunit is involved in antigen processing to generate class I binding peptides. This is Proteasome subunit beta type-9 (Psmb9) from Mus spicilegus (Steppe mouse).